The chain runs to 200 residues: Somatotropin (200 aa).

An N-terminal signal peptide occupies residues 1–22 (MARVLVVLSVVVASLFFSQGAT). His38 serves as a coordination point for Zn(2+). Cys71 and Cys173 are disulfide-bonded. Glu182 provides a ligand contact to Zn(2+). An intrachain disulfide couples Cys190 to Cys198.

The protein belongs to the somatotropin/prolactin family.

Its subcellular location is the secreted. Its function is as follows. Growth hormone plays an important role in growth control and is involved in the regulation of several anabolic processes. Implicated as an osmoregulatory substance important for seawater adaptation. This is Somatotropin (gh) from Heteropneustes fossilis (Stinging catfish).